The following is a 421-amino-acid chain: RNA exonuclease 4 (421 aa).

Disordered regions lie at residues Met-1–Lys-51 and Glu-79–Lys-179. Residues Ser-11–Pro-24 show a composition bias toward polar residues. The span at Lys-25–Trp-36 shows a compositional bias: basic residues. Composition is skewed to basic and acidic residues over residues Pro-92 to Val-107, Ala-140 to Lys-149, and Asp-161 to Gln-170. Residues Thr-234–Tyr-385 enclose the Exonuclease domain.

Belongs to the REXO4 family.

It localises to the nucleus. This is RNA exonuclease 4 (rexo4) from Xenopus laevis (African clawed frog).